Here is a 192-residue protein sequence, read N- to C-terminus: uncharacterized protein (192 aa).

Residues 53 to 111 adopt a coiled-coil conformation; it reads CLKESVERARKVYLSLLKDYERKSREYEKAYENYLKELRTYRETLYRIKEDLKFYERIC.

This is an uncharacterized protein from Aquifex aeolicus (strain VF5).